A 65-amino-acid polypeptide reads, in one-letter code: Large ribosomal subunit protein bL33 (65 aa).

A disordered region spans residues 19-40 (TVPSSKKRSAGVSRYTTEKNRR).

The protein belongs to the bacterial ribosomal protein bL33 family.

In Prochlorococcus marinus (strain NATL2A), this protein is Large ribosomal subunit protein bL33.